A 532-amino-acid polypeptide reads, in one-letter code: Light-independent protochlorophyllide reductase subunit B (532 aa).

Residue Asp-36 coordinates [4Fe-4S] cluster. Asp-282 functions as the Proton donor in the catalytic mechanism. 417–418 (GL) contributes to the substrate binding site.

It belongs to the ChlB/BchB/BchZ family. In terms of assembly, protochlorophyllide reductase is composed of three subunits; BchL, BchN and BchB. Forms a heterotetramer of two BchB and two BchN subunits. It depends on [4Fe-4S] cluster as a cofactor.

It carries out the reaction chlorophyllide a + oxidized 2[4Fe-4S]-[ferredoxin] + 2 ADP + 2 phosphate = protochlorophyllide a + reduced 2[4Fe-4S]-[ferredoxin] + 2 ATP + 2 H2O. It participates in porphyrin-containing compound metabolism; bacteriochlorophyll biosynthesis (light-independent). Its function is as follows. Component of the dark-operative protochlorophyllide reductase (DPOR) that uses Mg-ATP and reduced ferredoxin to reduce ring D of protochlorophyllide (Pchlide) to form chlorophyllide a (Chlide). This reaction is light-independent. The NB-protein (BchN-BchB) is the catalytic component of the complex. The protein is Light-independent protochlorophyllide reductase subunit B of Methylobacterium radiotolerans (strain ATCC 27329 / DSM 1819 / JCM 2831 / NBRC 15690 / NCIMB 10815 / 0-1).